The chain runs to 921 residues: uncharacterized protein (921 aa).

A kinase-like region spans residues 334-628 (MTKRKFLSID…NLKSIYYDFF (295 aa)). The span at 401–494 (GSSEWSFGSS…NNNNSDGSSG (94 aa)) shows a compositional bias: low complexity. Disordered regions lie at residues 401 to 499 (GSSE…DNRN) and 664 to 711 (NLYS…NSNS).

This is an uncharacterized protein from Dictyostelium discoideum (Social amoeba).